The following is a 62-amino-acid chain: Potassium channel toxin kappa-KTx 3.2 (62 aa).

The N-terminal stretch at 1-26 (MKSTLMTASLLILVLLSIVDYASVYA) is a signal peptide. Positions 27-36 (ELIDSEISME) are excised as a propeptide. 2 disulfide bridges follow: Cys-43–Cys-61 and Cys-47–Cys-57.

This sequence belongs to the short scorpion toxin superfamily. Potassium channel inhibitor kappa-KTx family. Kappa-KTx 3 subfamily. Expressed by the venom gland.

Its subcellular location is the secreted. Its function is as follows. Potassium channel inhibitor (Kv). The polypeptide is Potassium channel toxin kappa-KTx 3.2 (Heterometrus petersii (Asian forest scorpion)).